The following is a 485-amino-acid chain: Cytosol non-specific dipeptidase (485 aa).

H76 provides a ligand contact to Zn(2+). The active site involves D78. D115 lines the Zn(2+) pocket. The active-site Proton acceptor is the E145. The Zn(2+) site is built by E146 and D169. K296 is subject to N6-acetyllysine. A Zn(2+)-binding site is contributed by H457.

The protein belongs to the peptidase M20C family. It depends on Zn(2+) as a cofactor. Requires Co(2+) as cofactor.

It catalyses the reaction Hydrolysis of dipeptides, preferentially hydrophobic dipeptides including prolyl amino acids.. With respect to regulation, inhibited by metal chelators. In terms of biological role, dipeptidase with broad substrate specificity. Requires dipeptide substrates with an unblocked N-terminus and the amino group in the alpha or beta position. Non-protein amino acids and proline are not accepted in the C-terminal position, whereas some dipeptide amides and formyl amino acids are hydrolyzed. Also shows cysteinylglycinase activity, which is sufficient for E.coli to utilize cysteinylglycine as a cysteine source. The chain is Cytosol non-specific dipeptidase (pepD) from Escherichia coli (strain K12).